The chain runs to 163 residues: Epithelial membrane protein 3 (163 aa).

The chain crosses the membrane as a helical span at residues Leu4 to Leu24. Asn47 and Asn56 each carry an N-linked (GlcNAc...) asparagine glycan. The next 3 membrane-spanning stretches (helical) occupy residues Val66–Phe86, Thr100–Ile120, and Phe139–Leu159.

Belongs to the PMP-22/EMP/MP20 family.

It localises to the membrane. In terms of biological role, probably involved in cell proliferation and cell-cell interactions. This Homo sapiens (Human) protein is Epithelial membrane protein 3 (EMP3).